A 493-amino-acid polypeptide reads, in one-letter code: Protein nucleotidyltransferase YdiU (493 aa).

Positions 81, 83, 84, 103, 115, 116, 166, and 173 each coordinate ATP. Residue aspartate 244 is the Proton acceptor of the active site. Residues asparagine 245 and aspartate 254 each contribute to the Mg(2+) site. Residue aspartate 254 participates in ATP binding.

It belongs to the SELO family. Mg(2+) serves as cofactor. Mn(2+) is required as a cofactor.

It catalyses the reaction L-seryl-[protein] + ATP = 3-O-(5'-adenylyl)-L-seryl-[protein] + diphosphate. The catalysed reaction is L-threonyl-[protein] + ATP = 3-O-(5'-adenylyl)-L-threonyl-[protein] + diphosphate. The enzyme catalyses L-tyrosyl-[protein] + ATP = O-(5'-adenylyl)-L-tyrosyl-[protein] + diphosphate. It carries out the reaction L-histidyl-[protein] + UTP = N(tele)-(5'-uridylyl)-L-histidyl-[protein] + diphosphate. It catalyses the reaction L-seryl-[protein] + UTP = O-(5'-uridylyl)-L-seryl-[protein] + diphosphate. The catalysed reaction is L-tyrosyl-[protein] + UTP = O-(5'-uridylyl)-L-tyrosyl-[protein] + diphosphate. Its function is as follows. Nucleotidyltransferase involved in the post-translational modification of proteins. It can catalyze the addition of adenosine monophosphate (AMP) or uridine monophosphate (UMP) to a protein, resulting in modifications known as AMPylation and UMPylation. This chain is Protein nucleotidyltransferase YdiU, found in Shewanella frigidimarina (strain NCIMB 400).